We begin with the raw amino-acid sequence, 128 residues long: Global transcriptional regulator Spx 1 (128 aa).

An intrachain disulfide couples C10 to C13.

This sequence belongs to the ArsC family. Spx subfamily. Interacts with the C-terminal domain of the alpha subunit of the RNAP.

The protein localises to the cytoplasm. Global transcriptional regulator that plays a key role in stress response and exerts either positive or negative regulation of genes. Acts by interacting with the C-terminal domain of the alpha subunit of the RNA polymerase (RNAP). This interaction can enhance binding of RNAP to the promoter region of target genes and stimulate their transcription, or block interaction of RNAP with activator. In Lactococcus lactis subsp. lactis (strain IL1403) (Streptococcus lactis), this protein is Global transcriptional regulator Spx 1.